Consider the following 185-residue polypeptide: Calcium and integrin-binding family member 4 (185 aa).

EF-hand domains lie at 62–95 (RVNP…FSEQ), 97–132 (CPSL…LLKS), and 138–174 (DLLM…SPDF). Ca(2+) contacts are provided by D110, N112, N114, and D121.

In terms of assembly, interacts with ITGA2B (via C-terminus cytoplasmic tail region); the interaction is stabilized/increased in a calcium- and magnesium-dependent manner. As to expression, expressed weakly in megakaryocytes and endothelial cells.

The chain is Calcium and integrin-binding family member 4 (Cib4) from Mus musculus (Mouse).